The sequence spans 255 residues: 5'-nucleotidase SurE (255 aa).

Residues D7, D8, S38, and N90 each coordinate a divalent metal cation.

The protein belongs to the SurE nucleotidase family. A divalent metal cation serves as cofactor.

The protein localises to the cytoplasm. The enzyme catalyses a ribonucleoside 5'-phosphate + H2O = a ribonucleoside + phosphate. Its function is as follows. Nucleotidase that shows phosphatase activity on nucleoside 5'-monophosphates. This Picrophilus torridus (strain ATCC 700027 / DSM 9790 / JCM 10055 / NBRC 100828 / KAW 2/3) protein is 5'-nucleotidase SurE.